Consider the following 461-residue polypeptide: GTPase Der (461 aa).

2 EngA-type G domains span residues 3–167 (PQVI…GEKQ) and 190–371 (LKLA…AAWS). GTP contacts are provided by residues 9–16 (GRPNVGKS), 56–60 (DTAGW), 119–122 (NKAE), 196–203 (GRPNAGKS), 249–253 (DTAGM), and 314–317 (NKWD). The 85-residue stretch at 372–456 (KRVPTAALNR…PIRLTLRSPK (85 aa)) folds into the KH-like domain.

The protein belongs to the TRAFAC class TrmE-Era-EngA-EngB-Septin-like GTPase superfamily. EngA (Der) GTPase family. Associates with the 50S ribosomal subunit.

Its function is as follows. GTPase that plays an essential role in the late steps of ribosome biogenesis. This is GTPase Der from Novosphingobium aromaticivorans (strain ATCC 700278 / DSM 12444 / CCUG 56034 / CIP 105152 / NBRC 16084 / F199).